A 468-amino-acid polypeptide reads, in one-letter code: ATP synthase subunit beta 1 (468 aa).

Position 155 to 162 (155 to 162) interacts with ATP; the sequence is GGAGVGKT.

This sequence belongs to the ATPase alpha/beta chains family. F-type ATPases have 2 components, CF(1) - the catalytic core - and CF(0) - the membrane proton channel. CF(1) has five subunits: alpha(3), beta(3), gamma(1), delta(1), epsilon(1). CF(0) has three main subunits: a(1), b(2) and c(9-12). The alpha and beta chains form an alternating ring which encloses part of the gamma chain. CF(1) is attached to CF(0) by a central stalk formed by the gamma and epsilon chains, while a peripheral stalk is formed by the delta and b chains.

It is found in the cell inner membrane. The enzyme catalyses ATP + H2O + 4 H(+)(in) = ADP + phosphate + 5 H(+)(out). Functionally, produces ATP from ADP in the presence of a proton gradient across the membrane. The catalytic sites are hosted primarily by the beta subunits. This Syntrophotalea carbinolica (strain DSM 2380 / NBRC 103641 / GraBd1) (Pelobacter carbinolicus) protein is ATP synthase subunit beta 1.